A 233-amino-acid chain; its full sequence is MSKLGKFFKGGGSSKSRAAPSPQEALVRLRETEEMLGKKQEYLENRIQREIALAKKHGTQNKRAALQALKRKKRFEKQLTQIDGTLSTIEFQREALENSHTNTEVLRNMGFAAKAMKSVHENMDLNKIDDLMQEITEQQDIAQEISEAFSQRVGFGDDFDEDELMAELEELEQEELNKKMTNIRLPNVPSSSLPAQPNRKPGMSSTARRSRAASSQRAEEEDDDIKQLAAWAT.

Disordered regions lie at residues 1 to 24 and 173 to 233; these read MSKL…SPQE and QEEL…AWAT. Residues 1 to 153 form an intramolecular interaction with C-terminus region; that stretch reads MSKLGKFFKG…EISEAFSQRV (153 aa). Residues 125 to 183 are a coiled coil; that stretch reads LNKIDDLMQEITEQQDIAQEISEAFSQRVGFGDDFDEDELMAELEELEQEELNKKMTNI. Positions 154–233 are intramolecular interaction with N-terminus; it reads GFGDDFDEDE…DIKQLAAWAT (80 aa). A compositionally biased stretch (low complexity) spans 204-216; sequence SSTARRSRAASSQ. Serine 210 is subject to Phosphoserine; by AURKB.

The protein belongs to the SNF7 family. Probable core component of the endosomal sorting required for transport complex III (ESCRT-III). ESCRT-III components are thought to multimerize to form a flat lattice on the perimeter membrane of the endosome. Several assembly forms of ESCRT-III may exist that interact and act sequentially. Self-associates. Interacts with CHMP2A. Interacts with CHMP4A. Interacts with CHMP4B. Interacts with CHMP6. Interacts with VPS4A. Interacts with PDCD6IP; the interaction is direct. Post-translationally, phosphorylated at Ser-210 by AURKB during cytokinesis: together with ZFYVE19/ANCHR, phosphorylated CHMP4C retains abscission-competent VPS4 (VPS4A and/or VPS4B) at the midbody ring until abscission checkpoint signaling is terminated at late cytokinesis. As to expression, expressed in heart, spleen and kidney.

The protein localises to the cytoplasm. The protein resides in the cytosol. Its subcellular location is the late endosome membrane. It is found in the midbody. It localises to the midbody ring. Functionally, probable core component of the endosomal sorting required for transport complex III (ESCRT-III) which is involved in multivesicular bodies (MVBs) formation and sorting of endosomal cargo proteins into MVBs. MVBs contain intraluminal vesicles (ILVs) that are generated by invagination and scission from the limiting membrane of the endosome and mostly are delivered to lysosomes enabling degradation of membrane proteins, such as stimulated growth factor receptors, lysosomal enzymes and lipids. The MVB pathway appears to require the sequential function of ESCRT-O, -I,-II and -III complexes. ESCRT-III proteins mostly dissociate from the invaginating membrane before the ILV is released. The ESCRT machinery also functions in topologically equivalent membrane fission events, such as the terminal stages of cytokinesis and the budding of enveloped viruses (HIV-1 and other lentiviruses). Key component of the cytokinesis checkpoint, a process required to delay abscission to prevent both premature resolution of intercellular chromosome bridges and accumulation of DNA damage: upon phosphorylation by AURKB, together with ZFYVE19/ANCHR, retains abscission-competent VPS4 (VPS4A and/or VPS4B) at the midbody ring until abscission checkpoint signaling is terminated at late cytokinesis. Deactivation of AURKB results in dephosphorylation of CHMP4C followed by its dissociation from ANCHR and VPS4 and subsequent abscission. ESCRT-III proteins are believed to mediate the necessary vesicle extrusion and/or membrane fission activities, possibly in conjunction with the AAA ATPase VPS4. Involved in HIV-1 p6- and p9-dependent virus release. CHMP4A/B/C are required for the exosomal release of SDCBP, CD63 and syndecan. This chain is Charged multivesicular body protein 4c (CHMP4C), found in Homo sapiens (Human).